The following is a 351-amino-acid chain: Large ribosomal subunit protein uL3 (351 aa).

Disordered regions lie at residues 1–31 (MGHRKLASPRRGSAGLRPRKRSSELLPTPRT) and 246–271 (KGSRKIGTRGPSLGTPSYTPQPGQLG).

Belongs to the universal ribosomal protein uL3 family. In terms of assembly, part of the 50S ribosomal subunit. Forms a cluster with proteins L14 and L24e.

One of the primary rRNA binding proteins, it binds directly near the 3'-end of the 23S rRNA, where it nucleates assembly of the 50S subunit. This chain is Large ribosomal subunit protein uL3, found in Saccharolobus solfataricus (strain ATCC 35092 / DSM 1617 / JCM 11322 / P2) (Sulfolobus solfataricus).